Here is a 215-residue protein sequence, read N- to C-terminus: Protein N-lysine methyltransferase METTL21A (215 aa).

S-adenosyl-L-methionine contacts are provided by residues Trp-47, 73–75 (GAG), Asp-94, Trp-125, and Ala-141.

It belongs to the methyltransferase superfamily. METTL21 family.

It is found in the cytoplasm. The enzyme catalyses L-lysyl-[protein] + 3 S-adenosyl-L-methionine = N(6),N(6),N(6)-trimethyl-L-lysyl-[protein] + 3 S-adenosyl-L-homocysteine + 3 H(+). Protein-lysine methyltransferase that selectively trimethylates residues in heat shock protein 70 (HSP70) family members. The chain is Protein N-lysine methyltransferase METTL21A (mettl21a) from Xenopus tropicalis (Western clawed frog).